We begin with the raw amino-acid sequence, 517 residues long: Cytochrome P450 monooxygenase TRI4 (517 aa).

A helical membrane pass occupies residues 15–37; that stretch reads AVGAAVAVGALYFFCQCFYNLYL. N-linked (GlcNAc...) asparagine glycosylation occurs at Asn444. Residue Cys452 coordinates heme.

The protein belongs to the cytochrome P450 family. Heme serves as cofactor.

The protein resides in the membrane. It functions in the pathway sesquiterpene biosynthesis; trichothecene biosynthesis. Its function is as follows. Cytochrome P450 monooxygenase; part of the gene cluster that mediates the production of the antimicrobial trichothecene harzianum A (HA) that plays a role in Botrytis cinerea antagonistic activity and plant defense priming. The biosynthesis of harzianum A begins with the cyclization of farnesyl diphosphate to trichodiene and is catalyzed by the trichodiene synthase TRI5. Trichodiene undergoes a series of oxygenations catalyzed by the cytochrome P450 monooxygenase TRI4. TRI4 controls the addition of 3 oxygens at C-2, C-11, and the C-12, C-13-epoxide to form the intermediate isotrichodiol. Isotrichodiol then undergoes a non-enzymatic isomerization and cyclization to form 12,13-epoxytrichothec-9-ene (EPT) which is further converted to trichodermol by the cytochrome P450 monooxygenase TRI11 via C-4 hydroxylation. The last step of HA synthesis is esterification of an octatriendioyl moiety to the C-4 oxygen of trichodermol. The octatriendioyl moiety is probably produced by the polyketide synthase TRI17 and the esterification performed by the trichothecene O-acetyltransferase TRI3. This Trichoderma arundinaceum protein is Cytochrome P450 monooxygenase TRI4.